A 132-amino-acid polypeptide reads, in one-letter code: ATP synthase epsilon chain, cyanelle (132 aa).

This sequence belongs to the ATPase epsilon chain family. In terms of assembly, F-type ATPases have 2 components, CF(1) - the catalytic core - and CF(0) - the membrane proton channel. CF(1) has five subunits: alpha(3), beta(3), gamma(1), delta(1), epsilon(1). CF(0) has three main subunits: a, b and c.

It is found in the plastid. Its subcellular location is the cyanelle thylakoid membrane. In terms of biological role, produces ATP from ADP in the presence of a proton gradient across the membrane. The polypeptide is ATP synthase epsilon chain, cyanelle (Cyanophora paradoxa).